The primary structure comprises 365 residues: 3-dehydroquinate synthase (365 aa).

Residues 106–110 (GVIGD), 130–131 (TT), lysine 142, lysine 151, and 169–172 (FFAT) contribute to the NAD(+) site. Residues glutamate 184, histidine 247, and histidine 264 each coordinate Zn(2+).

This sequence belongs to the sugar phosphate cyclases superfamily. Dehydroquinate synthase family. It depends on Co(2+) as a cofactor. Zn(2+) serves as cofactor. The cofactor is NAD(+).

It is found in the cytoplasm. The catalysed reaction is 7-phospho-2-dehydro-3-deoxy-D-arabino-heptonate = 3-dehydroquinate + phosphate. It functions in the pathway metabolic intermediate biosynthesis; chorismate biosynthesis; chorismate from D-erythrose 4-phosphate and phosphoenolpyruvate: step 2/7. Its function is as follows. Catalyzes the conversion of 3-deoxy-D-arabino-heptulosonate 7-phosphate (DAHP) to dehydroquinate (DHQ). This chain is 3-dehydroquinate synthase, found in Listeria monocytogenes serotype 4a (strain HCC23).